A 132-amino-acid polypeptide reads, in one-letter code: UPF0292 protein PYRAB04740 (132 aa).

The region spanning D20–L100 is the Toprim domain. 3 residues coordinate Mg(2+): E26, D69, and D71.

This sequence belongs to the UPF0292 family. Mg(2+) is required as a cofactor.

This Pyrococcus abyssi (strain GE5 / Orsay) protein is UPF0292 protein PYRAB04740.